The following is a 587-amino-acid chain: Inorganic phosphate transporter 2-1, chloroplastic (587 aa).

The transit peptide at 1 to 71 (MTLPYRFSSV…VCPLASFSSY (71 aa)) directs the protein to the chloroplast. A disordered region spans residues 74–106 (SEGEEQHHADQPIQNPHESSTVSNESDGKGNAE). Positions 85 to 98 (PIQNPHESSTVSNE) are enriched in polar residues. 12 helical membrane passes run 127 to 147 (AISIVIAFSALTLPIFMKSLG), 154 to 174 (TKLLSYATLLFGFYMAWNIGA), 195 to 215 (AVMTAAVLEFSGALLMGTHVT), 233 to 253 (MLLFAGLLSSLAAAGTWLQVA), 265 to 285 (CIVGSMVGFGLVYGGAGAVFW), 289 to 309 (AKVASSWVISPILGALVSFLV), 327 to 347 (AAAAAPVAVFVGVASISSAAL), 352 to 372 (IFPIALSQALACGVAGAIVFD), 413 to 433 (LEIVYGIFGYMQVLSACFMSF), 465 to 485 (IVIPMDVLAWGGFGIVAGLTM), 523 to 543 (LGLPISATHTLVGAVMGVGFA), and 559 to 579 (ASWLVTIPVGATLAVIYTWIF).

The protein belongs to the inorganic phosphate transporter (PiT) (TC 2.A.20.2) family. In terms of tissue distribution, mostly expressed in young green tissues. Present in both auto- and heterotrophic tissues. Also expressed in root stele.

It localises to the plastid. It is found in the chloroplast inner membrane. Its function is as follows. Low affinity H(+)/Pi chloroplastic cotransporter. Involved in inorganic phosphate (orthophosphate, Pi) uptake in green parts of plants in Pi-sufficient conditions. Required for Pi retranslocation during Pi deprivation. The protein is Inorganic phosphate transporter 2-1, chloroplastic (PHT2-1) of Arabidopsis thaliana (Mouse-ear cress).